The sequence spans 132 residues: MSLYEHVFIARQDLSNAQAEGLIEHFSTVLADNGGKVVDREYWGVKTMAYKINKNRKGHYAFLKSDAPSAAVQEMERLMRLHDDVMRVLTIKVDKHAEGPSIQMQKRDERERGDRGDRSDRGDRGDRGGFRR.

The segment at 96–132 is disordered; the sequence is HAEGPSIQMQKRDERERGDRGDRSDRGDRGDRGGFRR. The segment covering 105 to 132 has biased composition (basic and acidic residues); that stretch reads QKRDERERGDRGDRSDRGDRGDRGGFRR.

It belongs to the bacterial ribosomal protein bS6 family.

Functionally, binds together with bS18 to 16S ribosomal RNA. The chain is Small ribosomal subunit protein bS6 from Cereibacter sphaeroides (strain ATCC 17023 / DSM 158 / JCM 6121 / CCUG 31486 / LMG 2827 / NBRC 12203 / NCIMB 8253 / ATH 2.4.1.) (Rhodobacter sphaeroides).